Consider the following 311-residue polypeptide: Transcriptional regulatory protein MoaR1 (311 aa).

The segment at residues 15-117 (LNATTAGAVQ…SEPPGYRLLI (103 aa)) is a DNA-binding region (ompR/PhoB-type).

The protein belongs to the AfsR/DnrI/RedD regulatory family.

Acts as a positive transcriptional regulator of the molybdopterin biosynthesis moa1 locus, promoting the expression of the moaA1B1C1D1 genes. In Mycobacterium bovis (strain BCG / Pasteur 1173P2), this protein is Transcriptional regulatory protein MoaR1 (moaR1).